The primary structure comprises 306 residues: tRNA dimethylallyltransferase (306 aa).

An ATP-binding site is contributed by 9 to 16; sequence GPTGIGKT. 11 to 16 lines the substrate pocket; that stretch reads TGIGKT. An interaction with substrate tRNA region spans residues 34 to 37; it reads DSMQ.

The protein belongs to the IPP transferase family. In terms of assembly, monomer. It depends on Mg(2+) as a cofactor.

It carries out the reaction adenosine(37) in tRNA + dimethylallyl diphosphate = N(6)-dimethylallyladenosine(37) in tRNA + diphosphate. Its function is as follows. Catalyzes the transfer of a dimethylallyl group onto the adenine at position 37 in tRNAs that read codons beginning with uridine, leading to the formation of N6-(dimethylallyl)adenosine (i(6)A). This is tRNA dimethylallyltransferase from Lactobacillus johnsonii (strain CNCM I-12250 / La1 / NCC 533).